A 146-amino-acid chain; its full sequence is Hemoglobin A/D subunit beta (146 aa).

One can recognise a Globin domain in the interval 2 to 146 (HWTSEEKQYI…VAHALALGYH (145 aa)). Histidine 63 and histidine 92 together coordinate heme b.

It belongs to the globin family. Hemoglobins A and D are heterotetramers of alpha-1, alpha-2 and two identical beta chains. Red blood cells.

Functionally, involved in oxygen transport from the lung to the various peripheral tissues. The chain is Hemoglobin A/D subunit beta from Aldabrachelys gigantea (Aldabra giant tortoise).